The sequence spans 342 residues: Nicotinate-nucleotide--dimethylbenzimidazole phosphoribosyltransferase (342 aa).

Glu311 serves as the catalytic Proton acceptor.

It belongs to the CobT family.

It carries out the reaction 5,6-dimethylbenzimidazole + nicotinate beta-D-ribonucleotide = alpha-ribazole 5'-phosphate + nicotinate + H(+). The protein operates within nucleoside biosynthesis; alpha-ribazole biosynthesis; alpha-ribazole from 5,6-dimethylbenzimidazole: step 1/2. In terms of biological role, catalyzes the synthesis of alpha-ribazole-5'-phosphate from nicotinate mononucleotide (NAMN) and 5,6-dimethylbenzimidazole (DMB). The chain is Nicotinate-nucleotide--dimethylbenzimidazole phosphoribosyltransferase from Vibrio atlanticus (strain LGP32) (Vibrio splendidus (strain Mel32)).